The sequence spans 433 residues: Adenylosuccinate synthetase (433 aa).

GTP-binding positions include 12–18 (GDEGKGK) and 40–42 (GHT). The active-site Proton acceptor is the Asp13. Positions 13 and 40 each coordinate Mg(2+). IMP contacts are provided by residues 13-16 (DEGK), 38-41 (NAGH), Thr130, Arg144, Gln225, Thr240, and Arg304. His41 acts as the Proton donor in catalysis. Residue 300–306 (ATTGRPR) coordinates substrate. Residues Arg306, 332–334 (KLD), and 414–416 (SIG) contribute to the GTP site.

This sequence belongs to the adenylosuccinate synthetase family. As to quaternary structure, homodimer. The cofactor is Mg(2+).

It is found in the cytoplasm. The enzyme catalyses IMP + L-aspartate + GTP = N(6)-(1,2-dicarboxyethyl)-AMP + GDP + phosphate + 2 H(+). It participates in purine metabolism; AMP biosynthesis via de novo pathway; AMP from IMP: step 1/2. In terms of biological role, plays an important role in the de novo pathway of purine nucleotide biosynthesis. Catalyzes the first committed step in the biosynthesis of AMP from IMP. The chain is Adenylosuccinate synthetase from Geobacter sulfurreducens (strain ATCC 51573 / DSM 12127 / PCA).